A 488-amino-acid chain; its full sequence is H2.0-like homeobox protein (488 aa).

Disordered regions lie at residues 118–173 (AYHH…SSKD) and 331–488 (WRHS…LGCL). Low complexity-rich tracts occupy residues 125-135 (QQQQQQQQPQQ) and 158-171 (PNPH…APSS). The homeobox DNA-binding region spans 276-335 (RSWSRAVFSNLQRKGLEKRFEIQKYVTKPDRKQLAAMLGLTDAQVKVWFQNRRMKWRHSK). Basic and acidic residues-rich tracts occupy residues 334 to 349 (SKEA…EAGE) and 363 to 372 (DERSPSRSEG). Acidic residues predominate over residues 373-383 (EAESESSDSES). Basic and acidic residues predominate over residues 390 to 401 (DTERTEGSERSL). Positions 422-432 (GSGGSSGGGGN) are enriched in gly residues. A compositionally biased stretch (low complexity) spans 433-454 (SFSFSSASSLSSSSTSAGCASS).

The protein belongs to the H2.0 homeobox family. As to expression, low level in normal B and T-cells, high level in activated lymphocytes and monocytes. Also found in thymus, tonsil, bone marrow, developing vessels, and fetal brain.

It localises to the nucleus. Its function is as follows. Transcription factor required for TBX21/T-bet-dependent maturation of Th1 cells as well as maintenance of Th1-specific gene expression. Involved in embryogenesis and hematopoiesis. The polypeptide is H2.0-like homeobox protein (HLX) (Homo sapiens (Human)).